We begin with the raw amino-acid sequence, 236 residues long: Probable sulfate/thiosulfate import ATP-binding protein CysA (236 aa).

In terms of domain architecture, ABC transporter spans 3–233 (ILIENISKRF…PTNTFVTNFL (231 aa)). An ATP-binding site is contributed by 35–42 (GPSGSGKS).

This sequence belongs to the ABC transporter superfamily. Sulfate/tungstate importer (TC 3.A.1.6) family.

The protein resides in the plastid. It localises to the chloroplast. The catalysed reaction is sulfate(out) + ATP + H2O = sulfate(in) + ADP + phosphate + H(+). It carries out the reaction thiosulfate(out) + ATP + H2O = thiosulfate(in) + ADP + phosphate + H(+). Part of the ABC transporter complex involved in sulfate/thiosulfate import. Responsible for energy coupling to the transport system. This chain is Probable sulfate/thiosulfate import ATP-binding protein CysA, found in Chlorella vulgaris (Green alga).